Reading from the N-terminus, the 315-residue chain is Aspartate carbamoyltransferase catalytic subunit (315 aa).

2 residues coordinate carbamoyl phosphate: Arg64 and Thr65. Residue Lys92 participates in L-aspartate binding. Carbamoyl phosphate is bound by residues Arg114, His142, and Gln145. L-aspartate-binding residues include Arg175 and Arg229. Carbamoyl phosphate is bound by residues Gly270 and Pro271.

It belongs to the aspartate/ornithine carbamoyltransferase superfamily. ATCase family. Heterododecamer (2C3:3R2) of six catalytic PyrB chains organized as two trimers (C3), and six regulatory PyrI chains organized as three dimers (R2).

The enzyme catalyses carbamoyl phosphate + L-aspartate = N-carbamoyl-L-aspartate + phosphate + H(+). It functions in the pathway pyrimidine metabolism; UMP biosynthesis via de novo pathway; (S)-dihydroorotate from bicarbonate: step 2/3. Its function is as follows. Catalyzes the condensation of carbamoyl phosphate and aspartate to form carbamoyl aspartate and inorganic phosphate, the committed step in the de novo pyrimidine nucleotide biosynthesis pathway. This is Aspartate carbamoyltransferase catalytic subunit from Bradyrhizobium diazoefficiens (strain JCM 10833 / BCRC 13528 / IAM 13628 / NBRC 14792 / USDA 110).